Reading from the N-terminus, the 158-residue chain is Ribosome maturation factor RimP (158 aa).

The protein belongs to the RimP family.

It is found in the cytoplasm. Functionally, required for maturation of 30S ribosomal subunits. This chain is Ribosome maturation factor RimP, found in Pseudomonas fluorescens (strain Pf0-1).